Consider the following 535-residue polypeptide: CTP synthase (535 aa).

An amidoligase domain region spans residues 1–266 (MKFVVITGGV…GDYICERLGL (266 aa)). S12 contacts CTP. A UTP-binding site is contributed by S12. Residues 13–18 (GIGKGI) and D70 each bind ATP. The Mg(2+) site is built by D70 and E140. Residues 147–149 (DIE), 187–192 (KTKPTQ), and K223 each bind CTP. Residues 187-192 (KTKPTQ) and K223 each bind UTP. A Glutamine amidotransferase type-1 domain is found at 291–535 (RIAVVGKYVD…IKAAAGQGPD (245 aa)). G355 is an L-glutamine binding site. The active-site Nucleophile; for glutamine hydrolysis is the C382. L-glutamine is bound by residues 383 to 386 (LGFQ), E406, and R464. Active-site residues include H508 and E510.

It belongs to the CTP synthase family. In terms of assembly, homotetramer.

It carries out the reaction UTP + L-glutamine + ATP + H2O = CTP + L-glutamate + ADP + phosphate + 2 H(+). It catalyses the reaction L-glutamine + H2O = L-glutamate + NH4(+). The catalysed reaction is UTP + NH4(+) + ATP = CTP + ADP + phosphate + 2 H(+). Its pathway is pyrimidine metabolism; CTP biosynthesis via de novo pathway; CTP from UDP: step 2/2. With respect to regulation, allosterically activated by GTP, when glutamine is the substrate; GTP has no effect on the reaction when ammonia is the substrate. The allosteric effector GTP functions by stabilizing the protein conformation that binds the tetrahedral intermediate(s) formed during glutamine hydrolysis. Inhibited by the product CTP, via allosteric rather than competitive inhibition. Functionally, catalyzes the ATP-dependent amination of UTP to CTP with either L-glutamine or ammonia as the source of nitrogen. Regulates intracellular CTP levels through interactions with the four ribonucleotide triphosphates. The polypeptide is CTP synthase (Methanopyrus kandleri (strain AV19 / DSM 6324 / JCM 9639 / NBRC 100938)).